The chain runs to 428 residues: D-amino acid dehydrogenase (428 aa).

3–17 (VVILGSGVVGVASAY) contacts FAD.

It belongs to the DadA oxidoreductase family. The cofactor is FAD.

It carries out the reaction a D-alpha-amino acid + A + H2O = a 2-oxocarboxylate + AH2 + NH4(+). Its pathway is amino-acid degradation; D-alanine degradation; NH(3) and pyruvate from D-alanine: step 1/1. Functionally, oxidative deamination of D-amino acids. The polypeptide is D-amino acid dehydrogenase (Burkholderia vietnamiensis (strain G4 / LMG 22486) (Burkholderia cepacia (strain R1808))).